A 312-amino-acid chain; its full sequence is Olfactory receptor-like protein COR4 (312 aa).

Residues 1 to 26 (MASGNCTTPTTFILSGLTDNPGLQMP) are Extracellular-facing. An N-linked (GlcNAc...) asparagine glycan is attached at Asn-5. The helical transmembrane segment at 27–49 (LFMVFLAIYTITLLTNLGLIALI) threads the bilayer. Residues 50 to 57 (SVDLHLQT) are Cytoplasmic-facing. Residues 58–79 (PMYIFLQNLSFTDAAYSTVITP) form a helical membrane-spanning segment. Residues 80 to 100 (KMLATFLEERKTISYIGCILQ) lie on the Extracellular side of the membrane. The cysteines at positions 97 and 179 are disulfide-linked. Residues 101-120 (YFSFVLLTVTESLLLAVMAY) form a helical membrane-spanning segment. Residues 121 to 139 (DRYVAICKPLLYPSIMTKA) lie on the Cytoplasmic side of the membrane. The helical transmembrane segment at 140–164 (VCWRLVKGLYSLAFLNSLVHTSGLL) threads the bilayer. Over 165–205 (KLSFCSSNVVNHFFCDNSPLFQISSSSTTLNELLVFIFGSL) the chain is Extracellular. A helical transmembrane segment spans residues 206-226 (FAMSSIITILISYVFIILTVV). Over 227–239 (RIRSKDGKYKAFS) the chain is Cytoplasmic. The chain crosses the membrane as a helical span at residues 240–260 (TCTSHLMAVSLFHGTVIFMYL). At 261 to 271 (RPVKLFSLDTD) the chain is on the extracellular side. Residues 272 to 292 (KIASLFYTVVIPMLNPLIYSW) form a helical membrane-spanning segment. Over 293–312 (RNKEVKDALRRVIATNVWIH) the chain is Cytoplasmic.

Belongs to the G-protein coupled receptor 1 family.

Its subcellular location is the cell membrane. In terms of biological role, odorant receptor. The chain is Olfactory receptor-like protein COR4 (COR4) from Gallus gallus (Chicken).